The primary structure comprises 72 residues: UPF0346 protein GTNG_1419 (72 aa).

It belongs to the UPF0346 family.

This is UPF0346 protein GTNG_1419 from Geobacillus thermodenitrificans (strain NG80-2).